The sequence spans 392 residues: Phosphopentomutase (392 aa).

Positions 10, 282, 287, 323, 324, and 335 each coordinate Mn(2+).

This sequence belongs to the phosphopentomutase family. It depends on Mn(2+) as a cofactor.

Its subcellular location is the cytoplasm. The catalysed reaction is 2-deoxy-alpha-D-ribose 1-phosphate = 2-deoxy-D-ribose 5-phosphate. It catalyses the reaction alpha-D-ribose 1-phosphate = D-ribose 5-phosphate. It participates in carbohydrate degradation; 2-deoxy-D-ribose 1-phosphate degradation; D-glyceraldehyde 3-phosphate and acetaldehyde from 2-deoxy-alpha-D-ribose 1-phosphate: step 1/2. Functionally, isomerase that catalyzes the conversion of deoxy-ribose 1-phosphate (dRib-1-P) and ribose 1-phosphate (Rib-1-P) to deoxy-ribose 5-phosphate (dRib-5-P) and ribose 5-phosphate (Rib-5-P), respectively. The sequence is that of Phosphopentomutase from Dictyoglomus thermophilum (strain ATCC 35947 / DSM 3960 / H-6-12).